Here is a 123-residue protein sequence, read N- to C-terminus: Immunoglobulin lambda variable 9-49 (123 aa).

Residues 1 to 19 (MAWAPLLLTLLSLLTGSLS) form the signal peptide. The framework-1 stretch occupies residues 20 to 44 (QPVLTQPPSASASLGASVTLTCTLS). The 103-residue stretch at 21–123 (PVLTQPPSAS…ADHGSGSNFV (103 aa)) folds into the Ig-like domain. Cys-41 and Cys-112 are oxidised to a cystine. Residues 45–51 (SGYSNYK) are complementarity-determining-1. Residues 52–68 (VDWYQQRPGKGPRFVMR) form a framework-2 region. The interval 69 to 76 (VGTGGIVG) is complementarity-determining-2. The interval 77–112 (SKGDGIPDRFSVLGSGLNRYLTIKNIQEEDESDYHC) is framework-3. Tyr-96 is modified (phosphotyrosine). Thr-98 is modified (phosphothreonine). Residues 113-123 (GADHGSGSNFV) form a complementarity-determining-3 region.

As to quaternary structure, immunoglobulins are composed of two identical heavy chains and two identical light chains; disulfide-linked.

The protein localises to the secreted. It localises to the cell membrane. V region of the variable domain of immunoglobulin light chains that participates in the antigen recognition. Immunoglobulins, also known as antibodies, are membrane-bound or secreted glycoproteins produced by B lymphocytes. In the recognition phase of humoral immunity, the membrane-bound immunoglobulins serve as receptors which, upon binding of a specific antigen, trigger the clonal expansion and differentiation of B lymphocytes into immunoglobulins-secreting plasma cells. Secreted immunoglobulins mediate the effector phase of humoral immunity, which results in the elimination of bound antigens. The antigen binding site is formed by the variable domain of one heavy chain, together with that of its associated light chain. Thus, each immunoglobulin has two antigen binding sites with remarkable affinity for a particular antigen. The variable domains are assembled by a process called V-(D)-J rearrangement and can then be subjected to somatic hypermutations which, after exposure to antigen and selection, allow affinity maturation for a particular antigen. The polypeptide is Immunoglobulin lambda variable 9-49 (Homo sapiens (Human)).